Reading from the N-terminus, the 100-residue chain is MIGLNHYLIVSGLLFCIGLAGMLKRKNILLLFFSTEIMLNAINIGFVAISKYTHNLDGQMFALFIIAIAASEVAIGLGLVILWFKKFKSLDIDSLNAMKG.

Transmembrane regions (helical) follow at residues methionine 1–glycine 21, isoleucine 28–alanine 48, and phenylalanine 64–phenylalanine 84.

This sequence belongs to the complex I subunit 4L family. As to quaternary structure, NDH-1 is composed of 14 different subunits. Subunits NuoA, H, J, K, L, M, N constitute the membrane sector of the complex.

The protein localises to the cell inner membrane. It carries out the reaction a quinone + NADH + 5 H(+)(in) = a quinol + NAD(+) + 4 H(+)(out). Its function is as follows. NDH-1 shuttles electrons from NADH, via FMN and iron-sulfur (Fe-S) centers, to quinones in the respiratory chain. The immediate electron acceptor for the enzyme in this species is believed to be ubiquinone. Couples the redox reaction to proton translocation (for every two electrons transferred, four hydrogen ions are translocated across the cytoplasmic membrane), and thus conserves the redox energy in a proton gradient. The chain is NADH-quinone oxidoreductase subunit K from Helicobacter pylori (strain Shi470).